A 371-amino-acid chain; its full sequence is 4-hydroxy-3-methylbut-2-en-1-yl diphosphate synthase (flavodoxin) (371 aa).

Residues C272, C275, C307, and E314 each coordinate [4Fe-4S] cluster.

Belongs to the IspG family. [4Fe-4S] cluster serves as cofactor.

The catalysed reaction is (2E)-4-hydroxy-3-methylbut-2-enyl diphosphate + oxidized [flavodoxin] + H2O + 2 H(+) = 2-C-methyl-D-erythritol 2,4-cyclic diphosphate + reduced [flavodoxin]. It functions in the pathway isoprenoid biosynthesis; isopentenyl diphosphate biosynthesis via DXP pathway; isopentenyl diphosphate from 1-deoxy-D-xylulose 5-phosphate: step 5/6. Functionally, converts 2C-methyl-D-erythritol 2,4-cyclodiphosphate (ME-2,4cPP) into 1-hydroxy-2-methyl-2-(E)-butenyl 4-diphosphate. The sequence is that of 4-hydroxy-3-methylbut-2-en-1-yl diphosphate synthase (flavodoxin) from Magnetococcus marinus (strain ATCC BAA-1437 / JCM 17883 / MC-1).